The following is a 147-amino-acid chain: Small ribosomal subunit protein uS5 (147 aa).

In terms of domain architecture, S5 DRBM spans 9-72 (FEEVIVDIGR…DDAFKNIVEV (64 aa)).

Belongs to the universal ribosomal protein uS5 family. Part of the 30S ribosomal subunit. Contacts proteins S4 and S8.

Its function is as follows. With S4 and S12 plays an important role in translational accuracy. In terms of biological role, located at the back of the 30S subunit body where it stabilizes the conformation of the head with respect to the body. In Campylobacter fetus subsp. fetus (strain 82-40), this protein is Small ribosomal subunit protein uS5.